A 142-amino-acid polypeptide reads, in one-letter code: HTH-type transcriptional regulator MntR (142 aa).

The 63-residue stretch at 1 to 63 (MPTPSMEDYI…YEKYRGLILT (63 aa)) folds into the HTH dtxR-type domain. Mn(2+)-binding residues include Asp8, Glu11, His77, Glu99, Glu102, and His103.

Belongs to the DtxR/MntR family. In terms of assembly, homodimer.

The protein resides in the cytoplasm. Its activity is regulated as follows. DNA binding is strongly activated by Mn(2+). Its function is as follows. Central regulator of manganese homeostasis. The sequence is that of HTH-type transcriptional regulator MntR from Listeria monocytogenes serotype 4b (strain F2365).